The following is a 405-amino-acid chain: Protein held out wings (405 aa).

The 69-residue stretch at 142–210 folds into the KH domain; that stretch reads YVPVREHPDF…HLSDDLHVLI (69 aa).

As to quaternary structure, homodimer. Interacts with Sxl; promoting nuclear retention of msl-2 transcripts. During embryogenesis, expression is seen in mesodermal precursors of somatic, visceral and pharyngeal muscle. Later in embryogenesis, expression is restricted to heart and muscle attachment sites of the epidermis. During onset of metamorphosis, expression is seen in muscle and muscle attachment cells.

Its subcellular location is the nucleus. In terms of biological role, RNA-binding protein involved in muscle development and dosage compensation. Vital role in steroid regulation of muscle development and to control heart rate. Required during embryogenesis, in late stages of somatic muscle development, for myotube migration and during metamorphosis for muscle reorganization. Required for integrin-mediated cell-adhesion in wing blade. Together with Sxl, acts as an inhibitor of dosage compensation in females by preventing production of msl-2 protein, an essential component of the MSL complex. Specifically binds to the 5'-UTR of msl-2 transcripts and cooperates with Sxl to promote nuclear retention of msl-2 mRNAs. In Drosophila melanogaster (Fruit fly), this protein is Protein held out wings (how).